A 116-amino-acid chain; its full sequence is Large ribosomal subunit protein bL17 (116 aa).

It belongs to the bacterial ribosomal protein bL17 family. Part of the 50S ribosomal subunit. Contacts protein L32.

The polypeptide is Large ribosomal subunit protein bL17 (Deinococcus geothermalis (strain DSM 11300 / CIP 105573 / AG-3a)).